A 191-amino-acid chain; its full sequence is Fe/S biogenesis protein NfuA (191 aa).

Positions 149 and 152 each coordinate [4Fe-4S] cluster.

Belongs to the NfuA family. As to quaternary structure, homodimer. Requires [4Fe-4S] cluster as cofactor.

Functionally, involved in iron-sulfur cluster biogenesis. Binds a 4Fe-4S cluster, can transfer this cluster to apoproteins, and thereby intervenes in the maturation of Fe/S proteins. Could also act as a scaffold/chaperone for damaged Fe/S proteins. This chain is Fe/S biogenesis protein NfuA, found in Cronobacter sakazakii (strain ATCC BAA-894) (Enterobacter sakazakii).